The following is a 139-amino-acid chain: Nucleoside diphosphate kinase (139 aa).

Residues Lys9, Phe57, Arg85, Thr91, Arg102, and Asn112 each contribute to the ATP site. The active-site Pros-phosphohistidine intermediate is the His115.

This sequence belongs to the NDK family. In terms of assembly, homotetramer. It depends on Mg(2+) as a cofactor.

The protein localises to the cytoplasm. It carries out the reaction a 2'-deoxyribonucleoside 5'-diphosphate + ATP = a 2'-deoxyribonucleoside 5'-triphosphate + ADP. The enzyme catalyses a ribonucleoside 5'-diphosphate + ATP = a ribonucleoside 5'-triphosphate + ADP. Functionally, major role in the synthesis of nucleoside triphosphates other than ATP. The ATP gamma phosphate is transferred to the NDP beta phosphate via a ping-pong mechanism, using a phosphorylated active-site intermediate. The chain is Nucleoside diphosphate kinase from Desulfosudis oleivorans (strain DSM 6200 / JCM 39069 / Hxd3) (Desulfococcus oleovorans).